A 311-amino-acid polypeptide reads, in one-letter code: Thioredoxin reductase (311 aa).

Residue 33 to 43 (EGFFSGISGGQ) coordinates FAD. An intrachain disulfide couples Cys138 to Cys141. 283–292 (DVQDKYYRQA) contributes to the FAD binding site.

Belongs to the class-II pyridine nucleotide-disulfide oxidoreductase family. As to quaternary structure, homodimer. The cofactor is FAD.

The protein localises to the cytoplasm. The catalysed reaction is [thioredoxin]-dithiol + NADP(+) = [thioredoxin]-disulfide + NADPH + H(+). The polypeptide is Thioredoxin reductase (trxB) (Chlamydia pneumoniae (Chlamydophila pneumoniae)).